Here is a 156-residue protein sequence, read N- to C-terminus: Transthyretin-like protein 1 (156 aa).

The first 17 residues, 1 to 17 (MKIALSFLFLTSTFSNA), serve as a signal peptide directing secretion. Asn151 carries an N-linked (GlcNAc...) asparagine glycan.

The protein belongs to the nematode transthyretin-like family.

The protein localises to the secreted. The protein is Transthyretin-like protein 1 (ttr-1) of Caenorhabditis elegans.